A 327-amino-acid chain; its full sequence is Phosphoenolpyruvate transferase (327 aa).

Residue D59 coordinates 7,8-didemethyl-8-hydroxy-5-deazariboflavin.

The protein belongs to the CofD family. Homodimer. The cofactor is Mg(2+).

It catalyses the reaction enolpyruvoyl-2-diphospho-5'-guanosine + 7,8-didemethyl-8-hydroxy-5-deazariboflavin = dehydro coenzyme F420-0 + GMP + H(+). It functions in the pathway cofactor biosynthesis; coenzyme F420 biosynthesis. Catalyzes the transfer of the phosphoenolpyruvate moiety from enoylpyruvoyl-2-diphospho-5'-guanosine (EPPG) to 7,8-didemethyl-8-hydroxy-5-deazariboflavin (FO) with the formation of dehydro coenzyme F420-0 and GMP. In Mycolicibacterium smegmatis (strain ATCC 700084 / mc(2)155) (Mycobacterium smegmatis), this protein is Phosphoenolpyruvate transferase.